A 930-amino-acid polypeptide reads, in one-letter code: MISVDRLSEEQALGMKEQEWAGPEALCPGWQEEEVSDGEGPEDSGHPDPTAHAYEVLQHTLRLEGMPLTIDRTGQPRTGSGPLDMTVCVLGSPTAFLPVLLEGGTRYPGAMVLCLAPAWASRVPSETSPGSWSLLLSRGVSFEAGGCTALEEFVPPRRATYVTGTFGSEGSWEGELARDLDCPTGGSALLTRWLEDPLLSRWLLSARAGLPVPPTLAFITGLWETLPEEPEPPGVHLVRLQDPQGQESLVRDEVGAFLEGSSMQPYDQVAVRLSGWRWRGTDPHSTHRKVEGEAVAQAVAALLKGLREEESILLEALVPTARLPTLPPRSAAPRLPMALRICTVVCRSWGDRPQLCQVACTAGRAEVPVRHGSALPLGLDSSLRQWGLADAAQRQALAGQLREAAEAAMAALLAAEGELSPAQRGGARAHTDVLGVDFLLACVDGTLELVALSANCLRCLETCLLAEGMGHDVGQPAGDVPRLLAECLLHRAQCHLVEGKDILLIGAGGVSKSFVWEAAREYGLRIHLVESDPEHFAAGLVETFLPYDSREHRRDEEHAERVLEMLRARGLRPDACLSYWDDCVVLTALLCQRLGLPGCPPAAVRLAKQKSRTHQHLQRCRRGRPPPAAFSVPCRRLRSHGDVERAAGAVPFPAVAKLEFGAGAVGVRLVENAGQCHAHAAQLWHDLRADADHPGIGLGWGNAMLLMEYVPGTEHDVDLVLFEGRLLGAWVSDNGPTRVPTFLETAATLPSCLPADRQAQLVRAALRCCRACGLRHGVFNVELKLSPAGPRLLEINPRMGGFYLRDWMRAVYGPDLLLAAVLLALGLPPVLPSRPAPRQQLAGVMCLASEHGRALRGGVMAALQGLQRRGLVRLNPLFEEAGGRYEEPCLSVACAGDGPAEACGRLLGLCQALGIDSPQYPVGHFLSHFK.

The tract at residues 1–24 is disordered; that stretch reads MISVDRLSEEQALGMKEQEWAGPE. An ATP-grasp domain is found at 624-825; the sequence is RPPPAAFSVP…LLLAAVLLAL (202 aa). ATP is bound at residue 650–716; that stretch reads VPFPAVAKLE…MEYVPGTEHD (67 aa). Mg(2+)-binding residues include glutamate 782, glutamate 794, and asparagine 796. 3 residues coordinate Mn(2+): glutamate 782, glutamate 794, and asparagine 796.

Homotetramer. Requires Mg(2+) as cofactor. Mn(2+) is required as a cofactor.

It catalyses the reaction beta-alanine + L-histidine + ATP = carnosine + ADP + phosphate + H(+). The enzyme catalyses 4-aminobutanoate + L-histidine + ATP = L-homocarnosine + ADP + phosphate + H(+). Functionally, catalyzes the synthesis of carnosine and homocarnosine. Carnosine is synthesized more efficiently than homocarnosine. This Gallus gallus (Chicken) protein is Carnosine synthase 1.